Reading from the N-terminus, the 203-residue chain is Endo-type membrane-bound lytic murein transglycosylase A (203 aa).

A signal peptide spans 1–15; sequence MKLRWFAFLVVLLAG. Cys-16 is lipidated: N-palmitoyl cysteine. Cys-16 is lipidated: S-diacylglycerol cysteine.

It belongs to the transglycosylase Slt family.

Its subcellular location is the cell outer membrane. The enzyme catalyses Endolytic cleavage of the (1-&gt;4)-beta-glycosidic linkage between N-acetylmuramic acid (MurNAc) and N-acetylglucosamine (GlcNAc) residues in peptidoglycan with concomitant formation of a 1,6-anhydrobond in the MurNAc residue.. In terms of biological role, murein-degrading enzyme. May play a role in recycling of muropeptides during cell elongation and/or cell division. Preferentially cleaves at a distance of more than two disaccharide units from the ends of the glycan chain. In Escherichia fergusonii (strain ATCC 35469 / DSM 13698 / CCUG 18766 / IAM 14443 / JCM 21226 / LMG 7866 / NBRC 102419 / NCTC 12128 / CDC 0568-73), this protein is Endo-type membrane-bound lytic murein transglycosylase A.